A 130-amino-acid chain; its full sequence is Encapsulin nanocompartment cargo protein EncC (130 aa).

Fe cation-binding residues include Glu-31, Glu-61, and His-64. Residues 61-64 (EREH) carry the Di-iron-binding motif motif. The segment at 103–130 (EAVGKEGAAPSPADVTPEKRLTVGSLRR) is disordered. The segment at 123-130 (LTVGSLRR) is probable targeting peptide.

Belongs to the ferritin-like superfamily.

It localises to the encapsulin nanocompartment. Its function is as follows. Cargo protein of a type 1 encapsulin nanocompartment. May help nucleate Fe atoms in the interior of the encapsulin nanocompartment. Present in about 92 copies/encapsulin nanocompartment. The polypeptide is Encapsulin nanocompartment cargo protein EncC (Myxococcus xanthus (strain DK1622)).